The sequence spans 568 residues: Urease subunit alpha (568 aa).

Residues 132-568 (GAIDTHVHYI…LPLAQLYNLF (437 aa)) enclose the Urease domain. Histidine 137, histidine 139, and lysine 219 together coordinate Ni(2+). Position 219 is an N6-carboxylysine (lysine 219). Histidine 221 lines the substrate pocket. The Ni(2+) site is built by histidine 248 and histidine 274. The active-site Proton donor is the histidine 322. Position 362 (aspartate 362) interacts with Ni(2+).

It belongs to the metallo-dependent hydrolases superfamily. Urease alpha subunit family. Heterotrimer of UreA (gamma), UreB (beta) and UreC (alpha) subunits. Three heterotrimers associate to form the active enzyme. It depends on Ni cation as a cofactor. In terms of processing, carboxylation allows a single lysine to coordinate two nickel ions.

The protein localises to the cytoplasm. It carries out the reaction urea + 2 H2O + H(+) = hydrogencarbonate + 2 NH4(+). It participates in nitrogen metabolism; urea degradation; CO(2) and NH(3) from urea (urease route): step 1/1. The chain is Urease subunit alpha from Azobacteroides pseudotrichonymphae genomovar. CFP2.